We begin with the raw amino-acid sequence, 151 residues long: 3-dehydroquinate dehydratase (151 aa).

Catalysis depends on tyrosine 24, which acts as the Proton acceptor. Substrate is bound by residues asparagine 76, histidine 82, and aspartate 89. The active-site Proton donor is histidine 102. Residues 103 to 104 and arginine 113 contribute to the substrate site; that span reads VS.

The protein belongs to the type-II 3-dehydroquinase family. In terms of assembly, homododecamer.

The catalysed reaction is 3-dehydroquinate = 3-dehydroshikimate + H2O. The protein operates within metabolic intermediate biosynthesis; chorismate biosynthesis; chorismate from D-erythrose 4-phosphate and phosphoenolpyruvate: step 3/7. Functionally, catalyzes a trans-dehydration via an enolate intermediate. This Afipia carboxidovorans (strain ATCC 49405 / DSM 1227 / KCTC 32145 / OM5) (Oligotropha carboxidovorans) protein is 3-dehydroquinate dehydratase.